Reading from the N-terminus, the 368-residue chain is Aminomethyltransferase (368 aa).

The protein belongs to the GcvT family. As to quaternary structure, the glycine cleavage system is composed of four proteins: P, T, L and H.

It catalyses the reaction N(6)-[(R)-S(8)-aminomethyldihydrolipoyl]-L-lysyl-[protein] + (6S)-5,6,7,8-tetrahydrofolate = N(6)-[(R)-dihydrolipoyl]-L-lysyl-[protein] + (6R)-5,10-methylene-5,6,7,8-tetrahydrofolate + NH4(+). Functionally, the glycine cleavage system catalyzes the degradation of glycine. This is Aminomethyltransferase from Xylella fastidiosa (strain M23).